We begin with the raw amino-acid sequence, 161 residues long: MHRSEPFLKMSLLILLFLGLAEACTPREVATKEKINLLKGIIGLMSRLSPDGLRHNITSLKMPPLVSPQDRTEEEIKKILGLLSLQVLHEETSGCKEEVKPFSGTTPSRKPLPKRKNTWNFLKCAYMVMTYLFVSYNKGDWCYCHYCNLELDIRDDPCCSF.

Residues 1–23 form the signal peptide; it reads MHRSEPFLKMSLLILLFLGLAEA. A glycan (N-linked (GlcNAc...) asparagine) is linked at Asn-56.

It localises to the secreted. This chain is Epididymal protein 13, found in Homo sapiens (Human).